We begin with the raw amino-acid sequence, 705 residues long: MKPTCILCLLVVILLHPRISKSSTSGNPSASSSSSSPPEIPAFRQCETIRIEMCRKIGYNETSMPNLVGNEMQTDVEYTLQTFAPLIEYDCSSQLKLFLCAAYVPMCTPKAPVHAIGPCRSLCESVRIRCHPVLQGFGFPWPPALDCDKFPRENNHETMCMEGPGELHQPQQEQDLYGLPGQGIPGGLGGKLPMDCSGLAKSHLYVRLPRSGRCAPLCEADILFTPAEKHLAEIWVSTWAYAALGLALVATVCLLASDGSRLASAKWSRLLSPLIWCHNMVTLGWAVRFMVGRTGTACGTDPQAPNESLLTVDGLSNASCASVFLMRYYFGMAACAWWAVLCLGWHRDIRRHSPDSKGHVVIPSNFGGSPAKRNSAKTAQQDLTQNNFVCFVAWGLPAFQTSAVIVARFVDADELLGACFVGNQSDKALQILVATPVFCYWIFGSMNLISGYLVHCRTKEILRNSNALSVQQQLQQLSAHSSSGIGIFLFIYGLACAMLLLAVIYEFANIDVWLGSGDTNTPLWPFLLRAFMELMLGICCFAWVLGPSISTLYKRQVSNGKMVKHTSAGAATGHLDGHSSSRGSHAACNSTVVSYHSVRTSMASVPLPPSPYKLKTSPGTGSISLNQMSNYSLGRSVHHQQRHSPHHHHHQQQQHHQFHPHHNHQHHSTSSHRLYYPPGSYASQKYSQHGSYYPHLQQYGNETLL.

Positions 1 to 22 (MKPTCILCLLVVILLHPRISKS) are cleaved as a signal peptide. The span at 21 to 37 (KSSTSGNPSASSSSSSP) shows a compositional bias: low complexity. The disordered stretch occupies residues 21 to 40 (KSSTSGNPSASSSSSSPPEI). Residues 23 to 233 (STSGNPSASS…FTPAEKHLAE (211 aa)) lie on the Extracellular side of the membrane. The region spanning 41–163 (PAFRQCETIR…NNHETMCMEG (123 aa)) is the FZ domain. Cystine bridges form between cysteine 46–cysteine 107, cysteine 54–cysteine 100, cysteine 91–cysteine 130, cysteine 119–cysteine 160, and cysteine 123–cysteine 147. Asparagine 60 is a glycosylation site (N-linked (GlcNAc...) asparagine). The chain crosses the membrane as a helical span at residues 234 to 254 (IWVSTWAYAALGLALVATVCL). The Cytoplasmic segment spans residues 255–270 (LASDGSRLASAKWSRL). Residues 271–291 (LSPLIWCHNMVTLGWAVRFMV) traverse the membrane as a helical segment. Residues 292–322 (GRTGTACGTDPQAPNESLLTVDGLSNASCAS) lie on the Extracellular side of the membrane. Residues asparagine 306 and asparagine 317 are each glycosylated (N-linked (GlcNAc...) asparagine). A helical membrane pass occupies residues 323-343 (VFLMRYYFGMAACAWWAVLCL). The Cytoplasmic portion of the chain corresponds to 344-386 (GWHRDIRRHSPDSKGHVVIPSNFGGSPAKRNSAKTAQQDLTQN). Residues 387–407 (NFVCFVAWGLPAFQTSAVIVA) traverse the membrane as a helical segment. The Extracellular portion of the chain corresponds to 408–430 (RFVDADELLGACFVGNQSDKALQ). The N-linked (GlcNAc...) asparagine glycan is linked to asparagine 423. The helical transmembrane segment at 431–451 (ILVATPVFCYWIFGSMNLISG) threads the bilayer. The Cytoplasmic portion of the chain corresponds to 452 to 483 (YLVHCRTKEILRNSNALSVQQQLQQLSAHSSS). Residues 484-504 (GIGIFLFIYGLACAMLLLAVI) traverse the membrane as a helical segment. Topologically, residues 505–529 (YEFANIDVWLGSGDTNTPLWPFLLR) are extracellular. A helical transmembrane segment spans residues 530–550 (AFMELMLGICCFAWVLGPSIS). The Cytoplasmic segment spans residues 551-705 (TLYKRQVSNG…LQQYGNETLL (155 aa)). Residues 635 to 681 (RSVHHQQRHSPHHHHHQQQQHHQFHPHHNHQHHSTSSHRLYYPPGSY) are disordered. Positions 636-670 (SVHHQQRHSPHHHHHQQQQHHQFHPHHNHQHHSTS) are enriched in basic residues. Positions 703–705 (TLL) match the PDZ-binding motif.

This sequence belongs to the G-protein coupled receptor Fz/Smo family.

It is found in the membrane. Receptor for Wnt proteins. Most of frizzled receptors are coupled to the beta-catenin canonical signaling pathway, which leads to the activation of disheveled proteins, inhibition of GSK-3 kinase, nuclear accumulation of beta-catenin and activation of Wnt target genes. A second signaling pathway involving PKC and calcium fluxes has been seen for some family members, but it is not yet clear if it represents a distinct pathway or if it can be integrated in the canonical pathway, as PKC seems to be required for Wnt-mediated inactivation of GSK-3 kinase. Both pathways seem to involve interactions with G-proteins. May be involved in transduction and intercellular transmission of polarity information during tissue morphogenesis and/or in differentiated tissues. Required to coordinate the cytoskeletons of epidermal cells to produce a parallel array of cuticular hairs and bristles. This chain is Frizzled-4 (fz4), found in Drosophila melanogaster (Fruit fly).